A 587-amino-acid chain; its full sequence is Aspartate--tRNA ligase (587 aa).

E175 provides a ligand contact to L-aspartate. An aspartate region spans residues 199-202 (QQFK). Residues R221 and H446 each coordinate L-aspartate. Residue 221–223 (RDE) participates in ATP binding. An ATP-binding site is contributed by E480. R487 is an L-aspartate binding site. 532 to 535 (GVDR) contributes to the ATP binding site.

Belongs to the class-II aminoacyl-tRNA synthetase family. Type 1 subfamily. Homodimer.

Its subcellular location is the cytoplasm. It catalyses the reaction tRNA(Asp) + L-aspartate + ATP = L-aspartyl-tRNA(Asp) + AMP + diphosphate. Functionally, catalyzes the attachment of L-aspartate to tRNA(Asp) in a two-step reaction: L-aspartate is first activated by ATP to form Asp-AMP and then transferred to the acceptor end of tRNA(Asp). This is Aspartate--tRNA ligase from Streptomyces coelicolor (strain ATCC BAA-471 / A3(2) / M145).